Consider the following 291-residue polypeptide: MAVVGPTAGGKSDLGIEIALALGGEVVNADSMQLYRGMDIGTAKVPEAERRGVPHHLLDVWDVTHPADVASFQADARRIIDGLLAAGRIPVLVGGSGLYVRAVLDNLAFPGTDPGVRARWEEELARVGAPALHDRLAARAPQAAAAILPSNGRRIVRALEVVELTGTFTATLPEHRSVYEVVQIGVDRPDLDQRIADRVEKMWGAGFPDEVRRLVECGLREGRTASRALGYAQVLAWFDGAMDSAEQAKLATITATRRFARRQRSWFRRDNRIAWLDQPDVTQVRRLVGSL.

5-12 (GPTAGGKS) is an ATP binding site. 7-12 (TAGGKS) lines the substrate pocket. The segment at 30–33 (DSMQ) is interaction with substrate tRNA.

The protein belongs to the IPP transferase family. In terms of assembly, monomer. Mg(2+) is required as a cofactor.

The enzyme catalyses adenosine(37) in tRNA + dimethylallyl diphosphate = N(6)-dimethylallyladenosine(37) in tRNA + diphosphate. Catalyzes the transfer of a dimethylallyl group onto the adenine at position 37 in tRNAs that read codons beginning with uridine, leading to the formation of N6-(dimethylallyl)adenosine (i(6)A). This is tRNA dimethylallyltransferase from Frankia casuarinae (strain DSM 45818 / CECT 9043 / HFP020203 / CcI3).